A 313-amino-acid chain; its full sequence is Olfactory receptor 1M1 (313 aa).

The Extracellular segment spans residues 1-25 (MEPQNHTSASEFILLGLSEKPDHDP). Asn-5 carries an N-linked (GlcNAc...) asparagine glycan. A helical transmembrane segment spans residues 26 to 46 (VLFSLFLCMYMITVVGNLLII). The Cytoplasmic segment spans residues 47 to 54 (LAISFDSH). The helical transmembrane segment at 55–75 (LHTPMYFFLANLSLVDFCLAT) threads the bilayer. Topologically, residues 76–97 (NTVPKMLVNIQTRNKSISYPCC) are extracellular. Asn-89 carries N-linked (GlcNAc...) asparagine glycosylation. Cysteines 97 and 179 form a disulfide. Residues 98-118 (LTQMYFFHFFGIMDSVLIAVM) form a helical membrane-spanning segment. Over 119–142 (AYDRFVAICHPLHYSTIMSPRLCG) the chain is Cytoplasmic. The chain crosses the membrane as a helical span at residues 143–163 (LLVGVPWVYSCFISLTHILLM). Residues 164–196 (ARLVFCGKNELPHYFCDLTPLLRLSCTDTTVNK) lie on the Extracellular side of the membrane. A helical membrane pass occupies residues 197-217 (IFVLIVAGMVIATPFVCILAS). Topologically, residues 218–244 (YARIIVAIMKVPSAGGRKKAFSTCSSH) are cytoplasmic. Residues 245 to 265 (LSVVALFYGTTIGVYLCPSSV) form a helical membrane-spanning segment. The Extracellular segment spans residues 266–274 (RTAVKEKAS). The helical transmembrane segment at 275-292 (AVMYTAVTPMLNPFIYSL) threads the bilayer. Over 293–313 (RNRDLKGALKKIINRKISTSS) the chain is Cytoplasmic.

Belongs to the G-protein coupled receptor 1 family. In terms of tissue distribution, expressed in testis.

It is found in the cell membrane. Odorant receptor. The chain is Olfactory receptor 1M1 from Mus musculus (Mouse).